The sequence spans 581 residues: Amino-acid acetyltransferase, mitochondrial (581 aa).

Residues 401–558 form the N-acetyltransferase domain; it reads FTLHNLIEDE…RIVGSEAVNI (158 aa).

This sequence belongs to the acetyltransferase family.

The protein resides in the mitochondrion. The catalysed reaction is L-glutamate + acetyl-CoA = N-acetyl-L-glutamate + CoA + H(+). It participates in amino-acid biosynthesis; L-arginine biosynthesis; N(2)-acetyl-L-ornithine from L-glutamate: step 1/4. N-acetylglutamate synthase involved in arginine biosynthesis. The protein is Amino-acid acetyltransferase, mitochondrial (ARG2) of Scheffersomyces stipitis (strain ATCC 58785 / CBS 6054 / NBRC 10063 / NRRL Y-11545) (Yeast).